We begin with the raw amino-acid sequence, 331 residues long: tRNA N6-adenosine threonylcarbamoyltransferase (331 aa).

Residues histidine 109, histidine 113, and tyrosine 130 each contribute to the Fe cation site. Substrate contacts are provided by residues 130-134 (YLSGG), aspartate 162, aspartate 183, and serine 262. Aspartate 290 provides a ligand contact to Fe cation.

It belongs to the KAE1 / TsaD family. Requires Fe(2+) as cofactor.

Its subcellular location is the cytoplasm. The catalysed reaction is L-threonylcarbamoyladenylate + adenosine(37) in tRNA = N(6)-L-threonylcarbamoyladenosine(37) in tRNA + AMP + H(+). Functionally, required for the formation of a threonylcarbamoyl group on adenosine at position 37 (t(6)A37) in tRNAs that read codons beginning with adenine. Is probably involved in the transfer of the threonylcarbamoyl moiety of threonylcarbamoyl-AMP (TC-AMP) to the N6 group of A37. This chain is tRNA N6-adenosine threonylcarbamoyltransferase, found in Saccharolobus islandicus (strain M.16.27) (Sulfolobus islandicus).